Consider the following 774-residue polypeptide: MVMGNNVEMDIKKLLTPLVKMKNANISMSIKFGEEEEEEWEPMGPTPMPKIPTLRHWDFKLLERYPPFYMPICDLCCLCTFGKCDLSRGKKGACGLNIKAQQARIVLIACCIGAACHAGHSRHLVHHLIETLGRDYPIDLGNEIEVEAPIARTVTGIKPKTLGDLEKILDYCEEQITHLLSAAHTGQEGDYLDFESKALHAGMIDDLAREAGDLAQIVAYNMPKGDEDAPLIELGFGCIDKSKPVILCIGHNVVPGSYILEYLEENSMEDEVEVCGICCTAIDITRVSDKPKVVGPLSRQLMFVRSGVADVVIVDEQCIRTDILEEVLKTGAVLIATNEKMCLGLEDVSHMDEDEIIGYLLRNRAALLLDEKKVGKVAVEVAKIVAKERKDRKTLPDLNEVVELAKQCTECGWCNRNCPNAFKVKEAMALAKQGNFKGFIDLYKRCYGCGRCEAICPRNLPIVSMTTKVGEAYYKDLKFKMRAGRGPIKDVEIRSVGAPIVFGDIPGVVALVGCSNHPNGEEEVAMIAKEFLERKYIVVATGCAAMAIGMWKDKDGKTLYEKYPGEFRAGGLVNCGSCLSNCHITGAAIKIANIFAKVPLRGNYAEVADYILNKVGAVGVAWGAMSQKAAAIATGVNRWGIPVILGPHGAKYRRLYLSNGEKFKVKDKKTGEILEIEPAPEHLIVTAENVKECICMIPKLCMRPNDTPKGRANKIYHYVDVYEKYFGRMPPDLEKFVRTEKDIPFMMKDKIMAYLEEKGWKPLEKYPQDPTILY.

[4Fe-4S] cluster contacts are provided by cysteine 73, cysteine 76, cysteine 77, cysteine 79, cysteine 84, and cysteine 94. Histidine 117 provides a ligand contact to CO. [Ni-4Fe-4S] cluster contacts are provided by histidine 251, cysteine 279, and cysteine 318. 2 consecutive 4Fe-4S ferredoxin-type domains span residues 398-427 and 436-466; these read LNEVVELAKQCTECGWCNRNCPNAFKVKEA and FKGFIDLYKRCYGCGRCEAICPRNLPIVSMT. [4Fe-4S] cluster is bound by residues cysteine 408, cysteine 411, cysteine 414, cysteine 418, cysteine 446, cysteine 449, cysteine 452, and cysteine 456. The [Ni-4Fe-4S] cluster site is built by cysteine 514, cysteine 543, and cysteine 578.

The protein belongs to the Ni-containing carbon monoxide dehydrogenase family. As to quaternary structure, heterotetramer of two alpha and two epsilon subunits. The ACDS complex is made up of alpha, epsilon, beta, gamma and delta subunits with a probable stoichiometry of (alpha(2)epsilon(2))(4)-beta(8)-(gamma(1)delta(1))(8). The cofactor is [4Fe-4S] cluster. [Ni-4Fe-4S] cluster is required as a cofactor.

The enzyme catalyses CO + 2 oxidized [2Fe-2S]-[ferredoxin] + H2O = 2 reduced [2Fe-2S]-[ferredoxin] + CO2 + 2 H(+). In terms of biological role, part of the ACDS complex that catalyzes the reversible cleavage of acetyl-CoA, allowing autotrophic growth from CO(2). The alpha-epsilon subcomponent functions as a carbon monoxide dehydrogenase. This is Acetyl-CoA decarbonylase/synthase complex subunit alpha from Methanocaldococcus jannaschii (strain ATCC 43067 / DSM 2661 / JAL-1 / JCM 10045 / NBRC 100440) (Methanococcus jannaschii).